The sequence spans 333 residues: Phosphate acyltransferase (333 aa).

This sequence belongs to the PlsX family. Homodimer. Probably interacts with PlsY.

It is found in the cytoplasm. The enzyme catalyses a fatty acyl-[ACP] + phosphate = an acyl phosphate + holo-[ACP]. Its pathway is lipid metabolism; phospholipid metabolism. Functionally, catalyzes the reversible formation of acyl-phosphate (acyl-PO(4)) from acyl-[acyl-carrier-protein] (acyl-ACP). This enzyme utilizes acyl-ACP as fatty acyl donor, but not acyl-CoA. This Enterococcus faecalis (strain ATCC 700802 / V583) protein is Phosphate acyltransferase.